The chain runs to 592 residues: Leucine-rich repeat and immunoglobulin-like domain-containing nogo receptor-interacting protein 3 (592 aa).

A signal peptide spans Met1–Gly24. The LRRNT domain maps to Cys25 to Ala54. Topologically, residues Cys25–Thr531 are extracellular. LRR repeat units lie at residues Glu55–Ala76, Ala79–Asn100, Arg103–Arg124, Asn127–Asp148, Ser151–Gly172, Ala175–His196, His207–Glu228, Asn247–His268, His271–Asp292, Arg295–Gly316, and Gln319–Ser340. An N-linked (GlcNAc...) asparagine glycan is attached at Asn127. N-linked (GlcNAc...) asparagine glycosylation is present at Asn185. N-linked (GlcNAc...) asparagine glycosylation is found at Asn247, Asn257, and Asn276. Asn324 carries N-linked (GlcNAc...) asparagine glycosylation. Residues Asn352–Lys406 form the LRRCT domain. The Ig-like C2-type domain occupies Pro407 to Thr496. Cys429 and Cys480 form a disulfide bridge. Residues Asn488 and Asn512 are each glycosylated (N-linked (GlcNAc...) asparagine). The helical transmembrane segment at Ala532 to Trp552 threads the bilayer. Over Ser553–Ile592 the chain is Cytoplasmic.

It localises to the membrane. In Homo sapiens (Human), this protein is Leucine-rich repeat and immunoglobulin-like domain-containing nogo receptor-interacting protein 3 (LINGO3).